The sequence spans 581 residues: Phosphatidylinositol N-acetylglucosaminyltransferase subunit Q (581 aa).

5 helical membrane-spanning segments follow: residues 276–298, 344–366, 381–403, 446–468, and 478–500; these read ANMLVSVLLDVALGLLLLSWLHS, LGRFFLYHIHLWISYIHLMSPFI, LTVALSIFSDIIALLTFHIYCFY, LFIGTLLFTILVFLLPTTALYYL, and ITVQGLIHLLVDLINSLPLYSLG.

This sequence belongs to the PIGQ family. As to quaternary structure, component of the glycosylphosphatidylinositol-N-acetylglucosaminyltransferase (GPI-GnT) complex composed at least by PIGA, PIGC, PIGH, PIGP, PIGQ, PIGY and DPM2. Interacts with PIGA, PIGH and PIGC.

The protein resides in the membrane. It functions in the pathway glycolipid biosynthesis; glycosylphosphatidylinositol-anchor biosynthesis. In terms of biological role, part of the glycosylphosphatidylinositol-N-acetylglucosaminyltransferase (GPI-GnT) complex that catalyzes the transfer of N-acetylglucosamine from UDP-N-acetylglucosamine to phosphatidylinositol and participates in the first step of GPI biosynthesis. The sequence is that of Phosphatidylinositol N-acetylglucosaminyltransferase subunit Q from Mus musculus (Mouse).